Here is an 83-residue protein sequence, read N- to C-terminus: Small ribosomal subunit protein bS16 (83 aa).

Belongs to the bacterial ribosomal protein bS16 family.

The polypeptide is Small ribosomal subunit protein bS16 (Borrelia hermsii (strain HS1 / DAH)).